The chain runs to 706 residues: Polyribonucleotide nucleotidyltransferase (706 aa).

D483 and D489 together coordinate Mg(2+). Residues 550–609 (PRITTIWVKTDKIRDVIGTGGKNIRNITETTGVTVDIEDTGRINIASTSKEACDLAIQMI) enclose the KH domain. The S1 motif domain occupies 619–687 (GKLYMGIVKK…KNGKVKLSRK (69 aa)).

It belongs to the polyribonucleotide nucleotidyltransferase family. Requires Mg(2+) as cofactor.

The protein localises to the cytoplasm. It catalyses the reaction RNA(n+1) + phosphate = RNA(n) + a ribonucleoside 5'-diphosphate. Involved in mRNA degradation. Catalyzes the phosphorolysis of single-stranded polyribonucleotides processively in the 3'- to 5'-direction. This chain is Polyribonucleotide nucleotidyltransferase, found in Pelobacter propionicus (strain DSM 2379 / NBRC 103807 / OttBd1).